A 260-amino-acid chain; its full sequence is UPF0246 protein Bmul_1054/BMULJ_02209 (260 aa).

It belongs to the UPF0246 family.

This chain is UPF0246 protein Bmul_1054/BMULJ_02209, found in Burkholderia multivorans (strain ATCC 17616 / 249).